We begin with the raw amino-acid sequence, 192 residues long: MAKLYFYYSTMNAGKSTTLLQSSYNYQERDMNTLVYTAAIDDRFGVGKVTSRIGISQEAQLFHKESDLFVEIAQHLQQQPLHCILVDEAQFLTKTQVYQLSEVVDKLKIPVLCYGLRTDFQAELFEGSKYLLAWADQLEELKTICYCGRKANFVLRLNDKGEVVRDGAQIQIGGNDSYLSVCRLHYKEKIAL.

Residues 9-16 (STMNAGKS) and 87-90 (DEAQ) contribute to the ATP site. Glu88 (proton acceptor) is an active-site residue. Residues Cys145, Cys147, Cys182, and His185 each coordinate Zn(2+).

This sequence belongs to the thymidine kinase family. In terms of assembly, homotetramer.

Its subcellular location is the cytoplasm. It carries out the reaction thymidine + ATP = dTMP + ADP + H(+). This is Thymidine kinase from Pasteurella multocida (strain Pm70).